A 310-amino-acid chain; its full sequence is Inner membrane protein YfdC (310 aa).

The segment covering methionine 1–glutamate 12 has biased composition (basic and acidic residues). Positions methionine 1–glutamate 27 are disordered. Residues methionine 1–alanine 58 are Cytoplasmic-facing. A helical transmembrane segment spans residues leucine 59 to glutamine 81. At valine 82–serine 90 the chain is on the periplasmic side. Residues phenylalanine 91–phenylalanine 113 traverse the membrane as a helical segment. At threonine 114–valine 133 the chain is on the cytoplasmic side. The chain crosses the membrane as a helical span at residues glycine 134–tryptophan 156. At alanine 157–glutamate 186 the chain is on the periplasmic side. A helical transmembrane segment spans residues methionine 187 to proline 206. Topologically, residues alanine 207–lysine 212 are cytoplasmic. Residues isoleucine 213–valine 232 traverse the membrane as a helical segment. Topologically, residues valine 233 to aspartate 251 are periplasmic. A helical transmembrane segment spans residues phenylalanine 252–leucine 274. The Cytoplasmic portion of the chain corresponds to methionine 275–alanine 310. The span at glutamate 291–lysine 303 shows a compositional bias: basic and acidic residues. Positions glutamate 291 to alanine 310 are disordered.

It is found in the cell inner membrane. The polypeptide is Inner membrane protein YfdC (yfdC) (Escherichia coli (strain K12)).